Reading from the N-terminus, the 101-residue chain is Large ribosomal subunit protein uL24 (101 aa).

This sequence belongs to the universal ribosomal protein uL24 family. As to quaternary structure, part of the 50S ribosomal subunit.

One of two assembly initiator proteins, it binds directly to the 5'-end of the 23S rRNA, where it nucleates assembly of the 50S subunit. Its function is as follows. One of the proteins that surrounds the polypeptide exit tunnel on the outside of the subunit. The sequence is that of Large ribosomal subunit protein uL24 from Streptococcus thermophilus (strain CNRZ 1066).